Consider the following 433-residue polypeptide: MRSVSYVQRVALEFSGSLFPHAICLGDVDNDTLNELVVGDTSGKVSVYKNDDSRPWLTCSCQGMLTCVGVGDVCNKGKNLLVAVSAEGWFHLFDLTPAKVLDASGHHETLIGEEQRPVFKQHIPANTKVMLISDIDGDGCRELVVGYTDRVVRAFRWEELGEGPEHLTGQLVSLKKWMLEGQVDSLSVTLGPLGLPELMVSQPGCAYAILLCTWKKDTGSPPASEGPMDGSRETPAARDVVLHQTSGRIHNKNVSTHLTGNIKQGHGTESSGSGLFALCTLDGTLKLMEEMEEADKLLWSVQVDHQLFALEKLDVTGNGHEEVVACAWDGQTYIIDHNRTVVRFQVDENIRAFCAGLYACKEGRNSPCLVYVTFNQKIYVYWEVQLERMESTNLVKLLETKPEYHSLLQELGVDPDDLPVTRALLHQTLYHPD.

One copy of the FG-GAP 1; atypical repeat lies at 19–48; sequence FPHAICLGDVDNDTLNELVVGDTSGKVSVY. Phosphoserine is present on Ser104. The stretch at 126 to 155 is one FG-GAP 2; atypical repeat; it reads NTKVMLISDIDGDGCRELVVGYTDRVVRAF. Ser220 carries the phosphoserine modification.

In terms of assembly, part of the KICSTOR complex composed of KPTN, ITFG2, KICS2 and SZT2. SZT2 probably serves as a link between the other three proteins in the KICSTOR complex and may mediate the direct interaction with the GATOR complex via GATOR1. The KICSTOR complex interacts directly with the GATOR1 complex and most probably indirectly with the GATOR2 complex in an amino acid-independent manner.

The protein localises to the lysosome membrane. In terms of biological role, as part of the KICSTOR complex functions in the amino acid-sensing branch of the TORC1 signaling pathway. Recruits, in an amino acid-independent manner, the GATOR1 complex to the lysosomal membranes and allows its interaction with GATOR2 and the RAG GTPases. Functions upstream of the RAG GTPases and is required to negatively regulate mTORC1 signaling in absence of amino acids. In absence of the KICSTOR complex mTORC1 is constitutively localized to the lysosome and activated. The KICSTOR complex is also probably involved in the regulation of mTORC1 by glucose. The sequence is that of KICSTOR complex protein ITFG2 from Pongo abelii (Sumatran orangutan).